The primary structure comprises 116 residues: Propanediol dehydratase-reactivating factor small subunit (116 aa).

Residue Glu31 participates in Mg(2+) binding.

It belongs to the DdrB/PduH family. In terms of assembly, forms a heterotetramer PduG(2)/PduH(2). Requires Mg(2+) as cofactor.

It localises to the bacterial microcompartment. The enzyme catalyses ATP + H2O = ADP + phosphate + H(+). It functions in the pathway polyol metabolism; 1,2-propanediol degradation. In terms of biological role, small subunit of the propanediol dehydratase-reactivating factor (DDR), which reactivates suicidally inhibited adenosylcobalamin-dependent propanediol dehydratase (diol dehydratase, DDH) found in the bacterial microcompartment (BMC) dedicated to 1,2-propanediol (1,2-PD) degradation. Reactivates inactivated DDH in the presence of ATP, Mg(2+) and free adenosylcobalamin (AdoCbl), by mediating the exchange of the tightly bound damaged cofactor AdoCbl for a free intact one. Functionally, expression of a cosmid containing the full 21-gene pdu operon in E.coli allows E.coli to grow on 1,2-propanediol (1,2-PD) with the appearance of bacterial microcompartments (BMC) in its cytoplasm. The 1,2-PD-specific bacterial microcompartment (BMC) concentrates low levels of 1,2-PD catabolic enzymes, concentrates volatile reaction intermediates thus enhancing pathway flux and keeps the level of toxic, mutagenic propionaldehyde low. The chain is Propanediol dehydratase-reactivating factor small subunit from Citrobacter freundii.